Consider the following 221-residue polypeptide: Cytidylate kinase (221 aa).

11–19 (GPSGVGKST) provides a ligand contact to ATP.

Belongs to the cytidylate kinase family. Type 1 subfamily.

The protein localises to the cytoplasm. The enzyme catalyses CMP + ATP = CDP + ADP. The catalysed reaction is dCMP + ATP = dCDP + ADP. The sequence is that of Cytidylate kinase from Mycoplasmopsis pulmonis (strain UAB CTIP) (Mycoplasma pulmonis).